Consider the following 104-residue polypeptide: Small ribosomal subunit protein uS10 (104 aa).

This sequence belongs to the universal ribosomal protein uS10 family. Part of the 30S ribosomal subunit.

Functionally, involved in the binding of tRNA to the ribosomes. This Aliarcobacter butzleri (strain RM4018) (Arcobacter butzleri) protein is Small ribosomal subunit protein uS10.